The primary structure comprises 307 residues: Reaction center protein M chain (307 aa).

Ala-2 is modified (blocked amino end (Ala)). The next 3 membrane-spanning stretches (helical) occupy residues 45-69 (FWNAVAYITGGIFTFIWLMVMFAQV), 103-123 (GWWLIATFFLTVSIFAWYMHI), and 133-153 (KPYLAYGFTGAIALYLVIYII). His-192 lines the (7R,8Z)-bacteriochlorophyll b pocket. The chain crosses the membrane as a helical span at residues 196 to 216 (IFFLLGSTLLLAMHAGTIWAL). Fe cation is bound by residues His-209, Glu-236, and His-256. A helical membrane pass occupies residues 257 to 277 (LWAFWFAWLCGITGALGVFFS).

This sequence belongs to the reaction center PufL/M/PsbA/D family. In terms of assembly, reaction center is composed of four bacteriochlorophylls, two bacteriopheophytins, two ubiquinones, one iron, and two highly hydrophobic polypeptide chains (designated L and M).

The protein resides in the cell membrane. Its function is as follows. The reaction center is a membrane-bound complex that mediates the initial photochemical event in the electron transfer process of photosynthesis. The sequence is that of Reaction center protein M chain (pufM) from Chloroflexus aurantiacus (strain ATCC 29366 / DSM 635 / J-10-fl).